Here is a 521-residue protein sequence, read N- to C-terminus: MENDMEEKFEDWKGKEAIPGKHGGIRAASIVCVVVMMENIVFIANGFNFVKYFMGSMHYTPATAANMVTNFMGTSFLLTLFGGFIADSFVTHFTTFIVFCCIELMGLILLTFQAHNPKLLPEKDKTPSTLQSAILFTGLYAMAIGTGGLKASLPSHGGDQIDRRNPRLISRFFDWLYFSICSGCLLAVTVVLWIEEKKGWIWSFNISVGILATALCIFTVGLPFYRFKRPNGSPLKKIAIVIISAARNRNKSDLDEEMMRGLISIYKNNSHNKLKWIDKATLNKNISETEVEETRTFLGLLPIFGSTIVMSCCVAQLSTFSAQQGMLMNKKLFHSFEIPVPSLTAIPLIFMLLSIPLYEFFGKKISSGNNNRSSSFNLKRIGLGLALSSVSMAVSAIVEAKRKHEVVHNNFRISVLWLVFQYLMLSVSDMLTLGGMLEFFYREAPSNMKSISTALGWCSTALGFFLSTTLVEVTNAVTGRLGHQWLGGEDLNKTRLELFYVLLCVLNTLNLLNYIFWAKRY.

A run of 12 helical transmembrane segments spans residues isoleucine 30–valine 50, alanine 65–isoleucine 85, phenylalanine 89–leucine 109, alanine 133–leucine 153, phenylalanine 172–leucine 192, phenylalanine 204–phenylalanine 224, phenylalanine 297–leucine 317, isoleucine 338–tyrosine 358, isoleucine 381–lysine 401, isoleucine 413–leucine 433, isoleucine 451–valine 471, and leucine 498–alanine 518.

Belongs to the major facilitator superfamily. Proton-dependent oligopeptide transporter (POT/PTR) (TC 2.A.17) family. In terms of tissue distribution, expressed in siliques.

The protein resides in the membrane. Its function is as follows. Involved in abscisic acid transport. This Arabidopsis thaliana (Mouse-ear cress) protein is Protein NRT1/ PTR FAMILY 4.2 (NPF4.2).